The sequence spans 367 residues: Alginate lyase (367 aa).

The N-terminal stretch at 1-27 (MKTSHLIRIALPGALAAALLASQVSQA) is a signal peptide. Substrate contacts are provided by residues 65–66 (SK), 138–139 (HT), and tyrosine 256.

It belongs to the polysaccharide lyase 5 family.

The protein resides in the periplasm. It carries out the reaction Eliminative cleavage of alginate to give oligosaccharides with 4-deoxy-alpha-L-erythro-hex-4-enuronosyl groups at their non-reducing ends and beta-D-mannuronate at their reducing end.. Its function is as follows. Catalyzes the depolymerization of alginate by cleaving the beta-1,4 glycosidic bond between two adjacent sugar residues via a beta-elimination mechanism. May serve to degrade mislocalized alginate that is trapped in the periplasmic space. This is Alginate lyase from Pseudomonas aeruginosa (strain LESB58).